Consider the following 300-residue polypeptide: Cation-efflux pump FieF (300 aa).

The next 4 membrane-spanning stretches (helical) occupy residues 12–32, 39–59, 82–102, and 114–134; these read AAIAATVMASLLLLIKIFAWW, ILAALVDSLVDIAASLTNLLV, AALAQSMFISGSALFLFLTGI, and PGVGIVVTLIALVCTIILVTF. Zn(2+) is bound by residues D45 and D49. 2 residues coordinate Zn(2+): H153 and D157. A helical membrane pass occupies residues 164-184; it reads ILVALGLAWYGWHRADALFAL.

Belongs to the cation diffusion facilitator (CDF) transporter (TC 2.A.4) family. FieF subfamily. In terms of assembly, homodimer.

The protein resides in the cell inner membrane. The catalysed reaction is Zn(2+)(in) + H(+)(out) = Zn(2+)(out) + H(+)(in). The enzyme catalyses Cd(2+)(in) + H(+)(out) = Cd(2+)(out) + H(+)(in). It carries out the reaction Fe(2+)(in) + H(+)(out) = Fe(2+)(out) + H(+)(in). Divalent metal cation transporter which exports Zn(2+), Cd(2+) and possibly Fe(2+). May be involved in zinc and iron detoxification by efflux. The chain is Cation-efflux pump FieF from Citrobacter koseri (strain ATCC BAA-895 / CDC 4225-83 / SGSC4696).